A 211-amino-acid polypeptide reads, in one-letter code: MRKYIKIGVAGPVGAGKTALIERLTREIASKYSVAVITNDIYTQEDAEFLTKNSLLPPERIMGVETGGCPHTAIREDASMNLEAVDEMVARFPEVELIFIESGGDNLSATFSPDLADVTIFVIDVAQGEKIPRKGGPGITRSDLLVINKTDLAPFVGADLSVMERDARRMRNGQPFIFTNLMKNENLDGVIGWIEKYALLKNIEDPASLVR.

11 to 18 (GPVGAGKT) is a GTP binding site.

This sequence belongs to the SIMIBI class G3E GTPase family. UreG subfamily. In terms of assembly, homodimer. UreD, UreF and UreG form a complex that acts as a GTP-hydrolysis-dependent molecular chaperone, activating the urease apoprotein by helping to assemble the nickel containing metallocenter of UreC. The UreE protein probably delivers the nickel.

Its subcellular location is the cytoplasm. In terms of biological role, facilitates the functional incorporation of the urease nickel metallocenter. This process requires GTP hydrolysis, probably effectuated by UreG. The polypeptide is Urease accessory protein UreG (Actinobacillus pleuropneumoniae serotype 5b (strain L20)).